We begin with the raw amino-acid sequence, 494 residues long: Neuronal acetylcholine receptor subunit alpha-6 (494 aa).

Positions 1–30 are cleaved as a signal peptide; that stretch reads MLNSRDQGNLHSGLCLWLCGFLALFKGSTG. Residues 31 to 240 lie on the Extracellular side of the membrane; that stretch reads CESEEQLFHR…TYSFYIRRLP (210 aa). N-linked (GlcNAc...) asparagine glycosylation is found at asparagine 54 and asparagine 171. 2 disulfide bridges follow: cysteine 158–cysteine 172 and cysteine 222–cysteine 223. Helical transmembrane passes span 241 to 265, 272 to 290, and 306 to 327; these read MFYT…FYLP, VTLC…LVIT, and YLLF…VLNI. Topologically, residues 328-465 are cytoplasmic; sequence HYRTPATHTM…WKYMAMVVDR (138 aa). The disordered stretch occupies residues 399 to 423; it reads QKSSDIAPGKRRSSQQPARWVAENS. Serine 401 carries the post-translational modification Phosphoserine. The chain crosses the membrane as a helical span at residues 466 to 485; sequence VFLWVFIIVCVFGTVGLFLQ.

It belongs to the ligand-gated ion channel (TC 1.A.9) family. Acetylcholine receptor (TC 1.A.9.1) subfamily. Alpha-6/CHRNA6 sub-subfamily. As to quaternary structure, neuronal AChR is composed of two different types of subunits: alpha and non-alpha (beta). CHRNA6/alpha-6 subunit can be combined to CHRNB2/beta-2 and CHRNA4/alpha-4 to give rise to functional receptors. Interacts with LYPD6. In terms of tissue distribution, predominantly expressed in only a few brain areas, including dopaminergic neurons, norepirephrine neurons and cells of the visual system.

The protein localises to the synaptic cell membrane. It catalyses the reaction K(+)(in) = K(+)(out). The catalysed reaction is Na(+)(in) = Na(+)(out). It carries out the reaction Ca(2+)(in) = Ca(2+)(out). Activated by a myriad of ligands such as acetylcholine, cytisine and nicotine. CHRNA6 nAChR activity is inhibited by the antagonists alpha-conotoxin MII and PIA, a small disulfide-constrained peptides from cone snails. Component of neuronal acetylcholine receptors (nAChRs) that function as pentameric, ligand-gated cation channels with high calcium permeability among other activities. nAChRs are excitatory neurotrasnmitter receptors formed by a collection of nAChR subunits known to mediate synaptic transmission in the nervous system and the neuromuscular junction. Each nAchR subunit confers differential attributes to channel properties, including activation, deactivation and desensitization kinetics, pH sensitivity, cation permeability, and binding to allosteric modulators. CHRNA6 forms pentameric channels with CHRNB2 and CHRNA4 that exhibit high sensitivity to ACh and nicotine and are predominantly expressed in only a few brain areas, including dopaminergic neurons, norepirephrine neurons and cells of the visual system. nAChrs containing CHRNA6 subunits mediate endogenous cholinergic modulation of dopamine and gamma-aminobutyric acid (GABA) release in response to nicotine at nerve terminals. The sequence is that of Neuronal acetylcholine receptor subunit alpha-6 (Chrna6) from Mus musculus (Mouse).